The following is a 394-amino-acid chain: GDSL esterase/lipase At1g31550 (394 aa).

The first 27 residues, 1 to 27 (MASLDSHVLMKLGSLFLSTLFVSIVSS), serve as a signal peptide directing secretion. S43 serves as the catalytic Nucleophile. N-linked (GlcNAc...) asparagine glycans are attached at residues N138, N290, and N322. Catalysis depends on residues D345 and H348.

It belongs to the 'GDSL' lipolytic enzyme family.

Its subcellular location is the secreted. The protein is GDSL esterase/lipase At1g31550 of Arabidopsis thaliana (Mouse-ear cress).